We begin with the raw amino-acid sequence, 951 residues long: Protein translocase subunit SecA (951 aa).

ATP is bound by residues Gln-90, 108–112, and Asp-509; that span reads GEGKT.

This sequence belongs to the SecA family. Monomer and homodimer. Part of the essential Sec protein translocation apparatus which comprises SecA, SecYEG and auxiliary proteins SecDF. Other proteins may also be involved.

The protein localises to the cell inner membrane. Its subcellular location is the cellular thylakoid membrane. The protein resides in the cytoplasm. The enzyme catalyses ATP + H2O + cellular proteinSide 1 = ADP + phosphate + cellular proteinSide 2.. In terms of biological role, part of the Sec protein translocase complex. Interacts with the SecYEG preprotein conducting channel. Has a central role in coupling the hydrolysis of ATP to the transfer of proteins into and across the cell membrane, serving as an ATP-driven molecular motor driving the stepwise translocation of polypeptide chains across the membrane. Functionally, probably participates in protein translocation into and across both the cytoplasmic and thylakoid membranes in cyanobacterial cells. In Prochlorococcus marinus (strain MIT 9303), this protein is Protein translocase subunit SecA.